Reading from the N-terminus, the 465-residue chain is tRNA-2-methylthio-N(6)-dimethylallyladenosine synthase (465 aa).

The 116-residue stretch at 26–141 (MRAHIITYGC…LPEALKANER (116 aa)) folds into the MTTase N-terminal domain. The [4Fe-4S] cluster site is built by Cys35, Cys71, Cys104, Cys173, Cys177, and Cys180. The 230-residue stretch at 159 to 388 (PKGALSAHVT…IEKQKEWSYR (230 aa)) folds into the Radical SAM core domain. Positions 391–453 (LEWVGKTVEV…PHLLFGEVVG (63 aa)) constitute a TRAM domain.

This sequence belongs to the methylthiotransferase family. MiaB subfamily. In terms of assembly, monomer. Requires [4Fe-4S] cluster as cofactor.

The protein resides in the cytoplasm. It carries out the reaction N(6)-dimethylallyladenosine(37) in tRNA + (sulfur carrier)-SH + AH2 + 2 S-adenosyl-L-methionine = 2-methylsulfanyl-N(6)-dimethylallyladenosine(37) in tRNA + (sulfur carrier)-H + 5'-deoxyadenosine + L-methionine + A + S-adenosyl-L-homocysteine + 2 H(+). In terms of biological role, catalyzes the methylthiolation of N6-(dimethylallyl)adenosine (i(6)A), leading to the formation of 2-methylthio-N6-(dimethylallyl)adenosine (ms(2)i(6)A) at position 37 in tRNAs that read codons beginning with uridine. The sequence is that of tRNA-2-methylthio-N(6)-dimethylallyladenosine synthase from Thermus thermophilus (strain ATCC 27634 / DSM 579 / HB8).